The chain runs to 488 residues: UDP-N-acetylmuramoyl-L-alanyl-D-glutamate--2,6-diaminopimelate ligase (488 aa).

Residues leucine 24, serine 26, and 41–43 (HQV) contribute to the UDP-N-acetyl-alpha-D-muramoyl-L-alanyl-D-glutamate site. Position 113-119 (113-119 (GTNGKTT)) interacts with ATP. Residues asparagine 154, 155 to 156 (TT), serine 182, glutamine 188, and arginine 190 contribute to the UDP-N-acetyl-alpha-D-muramoyl-L-alanyl-D-glutamate site. Lysine 222 is subject to N6-carboxylysine. Residues arginine 386, 410-413 (DNPR), glycine 461, and glutamate 465 each bind meso-2,6-diaminopimelate. Residues 410-413 (DNPR) carry the Meso-diaminopimelate recognition motif motif.

This sequence belongs to the MurCDEF family. MurE subfamily. Mg(2+) serves as cofactor. Post-translationally, carboxylation is probably crucial for Mg(2+) binding and, consequently, for the gamma-phosphate positioning of ATP.

The protein resides in the cytoplasm. The enzyme catalyses UDP-N-acetyl-alpha-D-muramoyl-L-alanyl-D-glutamate + meso-2,6-diaminopimelate + ATP = UDP-N-acetyl-alpha-D-muramoyl-L-alanyl-gamma-D-glutamyl-meso-2,6-diaminopimelate + ADP + phosphate + H(+). It participates in cell wall biogenesis; peptidoglycan biosynthesis. Its function is as follows. Catalyzes the addition of meso-diaminopimelic acid to the nucleotide precursor UDP-N-acetylmuramoyl-L-alanyl-D-glutamate (UMAG) in the biosynthesis of bacterial cell-wall peptidoglycan. The protein is UDP-N-acetylmuramoyl-L-alanyl-D-glutamate--2,6-diaminopimelate ligase of Haemophilus influenzae (strain PittEE).